A 734-amino-acid polypeptide reads, in one-letter code: Ribosomal RNA large subunit methyltransferase K/L (734 aa).

The THUMP domain maps to 49 to 167; sequence QAYRVCMWSR…KTEHTYCLDL (119 aa).

This sequence belongs to the methyltransferase superfamily. RlmKL family.

It is found in the cytoplasm. It carries out the reaction guanosine(2445) in 23S rRNA + S-adenosyl-L-methionine = N(2)-methylguanosine(2445) in 23S rRNA + S-adenosyl-L-homocysteine + H(+). The catalysed reaction is guanosine(2069) in 23S rRNA + S-adenosyl-L-methionine = N(2)-methylguanosine(2069) in 23S rRNA + S-adenosyl-L-homocysteine + H(+). In terms of biological role, specifically methylates the guanine in position 2445 (m2G2445) and the guanine in position 2069 (m7G2069) of 23S rRNA. The sequence is that of Ribosomal RNA large subunit methyltransferase K/L from Acinetobacter baylyi (strain ATCC 33305 / BD413 / ADP1).